A 360-amino-acid polypeptide reads, in one-letter code: UDP-N-acetylglucosamine--N-acetylmuramyl-(pentapeptide) pyrophosphoryl-undecaprenol N-acetylglucosamine transferase (360 aa).

UDP-N-acetyl-alpha-D-glucosamine is bound by residues 11–13 (TGG), N117, R160, S192, and Q294.

Belongs to the glycosyltransferase 28 family. MurG subfamily.

The protein localises to the cell inner membrane. The catalysed reaction is di-trans,octa-cis-undecaprenyl diphospho-N-acetyl-alpha-D-muramoyl-L-alanyl-D-glutamyl-meso-2,6-diaminopimeloyl-D-alanyl-D-alanine + UDP-N-acetyl-alpha-D-glucosamine = di-trans,octa-cis-undecaprenyl diphospho-[N-acetyl-alpha-D-glucosaminyl-(1-&gt;4)]-N-acetyl-alpha-D-muramoyl-L-alanyl-D-glutamyl-meso-2,6-diaminopimeloyl-D-alanyl-D-alanine + UDP + H(+). Its pathway is cell wall biogenesis; peptidoglycan biosynthesis. Its function is as follows. Cell wall formation. Catalyzes the transfer of a GlcNAc subunit on undecaprenyl-pyrophosphoryl-MurNAc-pentapeptide (lipid intermediate I) to form undecaprenyl-pyrophosphoryl-MurNAc-(pentapeptide)GlcNAc (lipid intermediate II). The protein is UDP-N-acetylglucosamine--N-acetylmuramyl-(pentapeptide) pyrophosphoryl-undecaprenol N-acetylglucosamine transferase of Rickettsia felis (strain ATCC VR-1525 / URRWXCal2) (Rickettsia azadi).